We begin with the raw amino-acid sequence, 23 residues long: Basic phospholipase A2 homolog (23 aa).

In terms of processing, contains 7 disulfide bonds. In terms of tissue distribution, expressed by the venom gland.

The protein localises to the secreted. The chain is Basic phospholipase A2 homolog from Trimeresurus stejnegeri (Chinese green tree viper).